Reading from the N-terminus, the 201-residue chain is Peroxiredoxin prdx-2 (201 aa).

In terms of domain architecture, Thioredoxin spans 10–168 (AFIGKPAPQF…TLRLVQAFQF (159 aa)). C55 functions as the Cysteine sulfenic acid (-SOH) intermediate in the catalytic mechanism.

It belongs to the peroxiredoxin family. AhpC/Prx1 subfamily. Monomer and homodimer; disulfide-linked. Under nonstress conditions, present in the reduced monomeric form. Forms active hyperoxidized monomers and disulfide-linked homodimers upon oxidation by hydrogen peroxide. Forms active oxidized homodimers in response to the drug metformin. In terms of processing, the enzyme can be inactivated by further oxidation of the cysteine sulfenic acid (C(P)-SOH) to sulphinic acid (C(P)-SO2H) instead of its condensation to a disulfide bond. Expressed in the gonad, neurons and intestine (at protein level). Expressed in the pharyngeal inter-neuron I4 and the sensory interneuron I2. Expressed in the intestine, pharyngeal muscle 1, vulval muscle, body wall muscle, epithelial cells e1 and e3, and neurons in the head and tail.

Its subcellular location is the cytoplasm. It catalyses the reaction a hydroperoxide + [thioredoxin]-dithiol = an alcohol + [thioredoxin]-disulfide + H2O. Activated following oxidation of the conserved redox-active cysteine residue, which subsequently allows for the oxidation and activation of substrates. In terms of biological role, thiol-specific peroxidase that catalyzes the reduction of hydrogen peroxide and organic hydroperoxides to water and alcohols, respectively. In I2 pharyngeal neurons, required for the inhibition of feeding in response to light and hydrogen peroxide. In the intestine, plays a role in protecting cells against oxidative stress by detoxifying peroxides such as hydrogen peroxide. In addition, plays a role in the recovery from oxidative stress induced by hydrogen peroxide. In its hyperoxidized form (induced by hydrogen peroxide), confers protection against heat stress. However, has a low tendency for overoxidation during the normal lifespan. Increases sensitivity to cytotoxicity caused by metalloids and heavy metals such as arsenic and cadmium by playing a role in inhibiting the expression of phase II detoxification genes such as gcs-1 in intestinal cells. In addition, in response to arsenite, promotes the secretion of the insulin ligand daf-28 into the pseudocoelom, which negatively regulates the activities of daf-16 and skn-1. Plays a role in promoting longevity. Plays a role in the mitohormetic pathway by promoting the activation of pmk-1 in response to the drug metformin. The polypeptide is Peroxiredoxin prdx-2 (Caenorhabditis elegans).